Consider the following 104-residue polypeptide: Large ribosomal subunit protein uL24 (104 aa).

Belongs to the universal ribosomal protein uL24 family. In terms of assembly, part of the 50S ribosomal subunit.

One of two assembly initiator proteins, it binds directly to the 5'-end of the 23S rRNA, where it nucleates assembly of the 50S subunit. Functionally, one of the proteins that surrounds the polypeptide exit tunnel on the outside of the subunit. In Chelativorans sp. (strain BNC1), this protein is Large ribosomal subunit protein uL24.